A 124-amino-acid chain; its full sequence is Glycine cleavage system H protein (124 aa).

In terms of domain architecture, Lipoyl-binding spans 22–104 (TATVGITDFA…YGDGWMIEIE (83 aa)). Lys63 bears the N6-lipoyllysine mark.

It belongs to the GcvH family. The glycine cleavage system is composed of four proteins: P, T, L and H. It depends on (R)-lipoate as a cofactor.

In terms of biological role, the glycine cleavage system catalyzes the degradation of glycine. The H protein shuttles the methylamine group of glycine from the P protein to the T protein. The chain is Glycine cleavage system H protein from Salinibacter ruber (strain DSM 13855 / M31).